We begin with the raw amino-acid sequence, 135 residues long: Protein PsiE homolog (135 aa).

4 consecutive transmembrane segments (helical) span residues 14–34 (LQTILNIGLLVLATILVIFLV), 54–74 (YQLIEGIVIYFLYFEFIALIV), 82–102 (HFPLRYFIYIGITAIIRLIIV), and 107–127 (PSDTLMYSAAILLLVVTLYLA).

This sequence belongs to the PsiE family.

It is found in the cell inner membrane. This chain is Protein PsiE homolog, found in Pectobacterium carotovorum subsp. carotovorum (strain PC1).